The sequence spans 149 residues: Ribonuclease pancreatic (149 aa).

Positions 1 to 25 are cleaved as a signal peptide; sequence MGLEKSLILFPLLVLVLGWVQPSLA. Residues Lys-32 and Arg-35 each coordinate substrate. His-37 (proton acceptor) is an active-site residue. 4 cysteine pairs are disulfide-bonded: Cys-51/Cys-109, Cys-65/Cys-120, Cys-83/Cys-135, and Cys-90/Cys-97. Substrate is bound by residues 66-70, Lys-91, and Arg-110; that span reads KPVNT. The active-site Proton donor is His-144.

Belongs to the pancreatic ribonuclease family. As to quaternary structure, monomer. Interacts with and forms tight 1:1 complexes with RNH1. Dimerization of two such complexes may occur. Interaction with RNH1 inhibits this protein. As to expression, pancreas.

It is found in the secreted. The catalysed reaction is an [RNA] containing cytidine + H2O = an [RNA]-3'-cytidine-3'-phosphate + a 5'-hydroxy-ribonucleotide-3'-[RNA].. The enzyme catalyses an [RNA] containing uridine + H2O = an [RNA]-3'-uridine-3'-phosphate + a 5'-hydroxy-ribonucleotide-3'-[RNA].. Functionally, endonuclease that catalyzes the cleavage of RNA on the 3' side of pyrimidine nucleotides. Acts on single-stranded and double-stranded RNA. This Uranomys ruddi (White-bellied brush-furred rat) protein is Ribonuclease pancreatic (RNASE1).